Consider the following 123-residue polypeptide: uncharacterized protein (123 aa).

Residues 36–76 adopt a coiled-coil conformation; that stretch reads VDRQENKKEFLSAEEAREKFKELINQVRSWKEQMSTLSKYA.

This is an uncharacterized protein from Aquifex aeolicus (strain VF5).